The chain runs to 773 residues: MDLNTYLKLLNLLDSESQKIMLELQAMFSAAGLALRGRGTHTDGIIVKGNLTVLHSSDVPSHSLFTPGKKYDVIFRHANIVGGAKDDALINGRGSAIRIGNIGDDLSKPRLLDLVLNTGEVFGLPTARLYHQFFGSDFHQKSDMLASGSLRRYAVEAALRNPDSFTELYYHTQLCYEWVDSKKKSRYARFRLLNPNQSTEGGLLDDSVEIGPRLVLPRKRGDTREKNYLRNEFRQRLTDGNIVEYVLQAQFRSIEDVAVDCSNIWDPNTYPWLDIAAIVLNQDESENDYYQEIAYNPGNTHYDLKLPNSYSVDDFASLGVSGALVHYFGSIVRAERTQYLYGSKDDLPGKPVYFPLPVTEIPSKRFLFLLEKYNFLTDNSYPSDGEHDKIEALVSAMPTTALDLAVGTTDPTDIPDSYFLERRLNGYNPGAIRESSGQEGWTHELTHNLAKYDIKPGLHFPDFVQCRLFVDKQNGVKLHSIKIDDHEITPCQEQWQYAKRTYLQAEFLSQELKLHLARCHFNIEQYVMAIKRRLAPTHPVRAFINPHLEGLIFINSSAVPKIIGSTGFIPIASMLTQGSIVDVMKNELSKLSYMWNPIADLPRDIPGDLFTPAATAYWELLNNYVEQGLLQPFEDELRTEVNAIQVDELFAELKERSLYSGDQPPKYDSSELKSLLMYIIYHSSFLHSWANFKQYDDAGNPNHVSMGDYSQYDQQTQDKIRFSQRSLTWVLSSIRYNSVAVYGSDLLKQLIREKSSILEPGLPLEDLMMSINI.

Residues 176-773 enclose the Lipoxygenase domain; that stretch reads YEWVDSKKKS…LEDLMMSINI (598 aa). Residues His-515, His-520, and Ile-773 each coordinate Fe cation.

It belongs to the lipoxygenase family.

It catalyses the reaction (9Z,12Z,15Z)-octadecatrienoate + O2 = (9R,10E,12Z,15Z)-9-hydroperoxyoctadeca-10,12,15-trienoate. Its pathway is lipid metabolism; oxylipin biosynthesis. Functionally, catalyzes the conversion of alpha-linoleate to (9R,10E,12Z,15Z)-9-hydroperoxyoctadeca-10,12,15-trienoate in oxylipin biosynthesis. Also converts alpha-linoleate to (9R,10E,12Z)-9-hydroperoxyoctadeca-10,12-dienoate. The sequence is that of Linolenate 9R-lipoxygenase from Nostoc sp. (strain PCC 7120 / SAG 25.82 / UTEX 2576).